Consider the following 456-residue polypeptide: UDP-N-acetylmuramoylalanine--D-glutamate ligase (456 aa).

Gly113–Thr119 is an ATP binding site.

This sequence belongs to the MurCDEF family.

It is found in the cytoplasm. The catalysed reaction is UDP-N-acetyl-alpha-D-muramoyl-L-alanine + D-glutamate + ATP = UDP-N-acetyl-alpha-D-muramoyl-L-alanyl-D-glutamate + ADP + phosphate + H(+). Its pathway is cell wall biogenesis; peptidoglycan biosynthesis. Cell wall formation. Catalyzes the addition of glutamate to the nucleotide precursor UDP-N-acetylmuramoyl-L-alanine (UMA). In Crocosphaera subtropica (strain ATCC 51142 / BH68) (Cyanothece sp. (strain ATCC 51142)), this protein is UDP-N-acetylmuramoylalanine--D-glutamate ligase.